Reading from the N-terminus, the 229-residue chain is Peptidase E (229 aa).

Residues S120, D135, and H157 each act as charge relay system in the active site.

This sequence belongs to the peptidase S51 family.

It localises to the cytoplasm. The enzyme catalyses Dipeptidase E catalyzes the hydrolysis of dipeptides Asp-|-Xaa. It does not act on peptides with N-terminal Glu, Asn or Gln, nor does it cleave isoaspartyl peptides.. Its function is as follows. Hydrolyzes dipeptides containing N-terminal aspartate residues. May play a role in allowing the cell to use peptide aspartate to spare carbon otherwise required for the synthesis of the aspartate family of amino acids. The polypeptide is Peptidase E (Shigella sonnei (strain Ss046)).